A 313-amino-acid chain; its full sequence is Formimidoylglutamase (313 aa).

Positions 130, 155, 157, 159, 241, and 243 each coordinate Mn(2+).

Belongs to the arginase family. Mn(2+) serves as cofactor.

It catalyses the reaction N-formimidoyl-L-glutamate + H2O = formamide + L-glutamate. It participates in amino-acid degradation; L-histidine degradation into L-glutamate; L-glutamate from N-formimidoyl-L-glutamate (hydrolase route): step 1/1. Its function is as follows. Catalyzes the conversion of N-formimidoyl-L-glutamate to L-glutamate and formamide. The protein is Formimidoylglutamase of Salmonella arizonae (strain ATCC BAA-731 / CDC346-86 / RSK2980).